We begin with the raw amino-acid sequence, 674 residues long: MSDAVDIQREWSELAQEVRKHRELYYNGEPSIPDADFDELFQRLLALEAEHPELQTPDSPTQQVGAAPEGAVDIEHLERLYSLDNVFSAEELQDWLDRTPAEAYLTELKIDGLSIDLVYRDGKLVTAATRGDGRVGEDITANARVIPDIPHELTGTDEYPVPSLVEVRGEVYMRPDEFEEINAARREDGKPTFANPRNAAAGGLRMKDPEDVKKRRLHMVCHGIGARERFQPTSQHDAYKALEAWGFPVSPYTQRVTTAKEVQERVTYWEEHRHDAYFEMDGLVIKVDDLASQRALGATSRAPRWAIAYKYPPEEVTTKLLNIEVGVGRTGRVTPFAIMEPVFVSGSTVSMATLHNQFEVKNKNVLIGDTIIIRKAGEIIPEVLGPVLDKRDGSETEWVFPENCPACGTKLAPQKEGDQDWRCPNTRSCPAQLAARLEYLASRKALDIGELGEKAAADLISSGVLEDEADLFDLDEQALLKSSVYTTQKGALNASGKKLLENLKTARQAEFWRVLVALSIRHVGPIAARALATRFGSMEVLRAASVEELADTDGVGTIIAESFKQWFEVDWHDNIVQKWTAAGVTMEEESSDKPAQTLEGITVVVTGTLENFTRDSAKEAIITRGGKASSSVSKKTNYVVVGENAGSKEQKARDLGLTILDEEGFTRLLETGEA.

NAD(+) contacts are provided by residues 34 to 38, 82 to 83, and Glu107; these read DADFD and SL. The active-site N6-AMP-lysine intermediate is the Lys109. Residues Arg130, Glu170, Lys286, and Lys310 each contribute to the NAD(+) site. Zn(2+)-binding residues include Cys404, Cys407, Cys423, and Cys429. Residues 593-674 form the BRCT domain; that stretch reads KPAQTLEGIT…FTRLLETGEA (82 aa).

This sequence belongs to the NAD-dependent DNA ligase family. LigA subfamily. Mg(2+) serves as cofactor. The cofactor is Mn(2+).

It catalyses the reaction NAD(+) + (deoxyribonucleotide)n-3'-hydroxyl + 5'-phospho-(deoxyribonucleotide)m = (deoxyribonucleotide)n+m + AMP + beta-nicotinamide D-nucleotide.. DNA ligase that catalyzes the formation of phosphodiester linkages between 5'-phosphoryl and 3'-hydroxyl groups in double-stranded DNA using NAD as a coenzyme and as the energy source for the reaction. It is essential for DNA replication and repair of damaged DNA. The sequence is that of DNA ligase from Corynebacterium aurimucosum (strain ATCC 700975 / DSM 44827 / CIP 107346 / CN-1) (Corynebacterium nigricans).